Here is a 353-residue protein sequence, read N- to C-terminus: Tetraacyldisaccharide 4'-kinase (353 aa).

Position 49-56 (49-56 (TAGGTGKT)) interacts with ATP.

The protein belongs to the LpxK family.

It carries out the reaction a lipid A disaccharide + ATP = a lipid IVA + ADP + H(+). It participates in glycolipid biosynthesis; lipid IV(A) biosynthesis; lipid IV(A) from (3R)-3-hydroxytetradecanoyl-[acyl-carrier-protein] and UDP-N-acetyl-alpha-D-glucosamine: step 6/6. Its function is as follows. Transfers the gamma-phosphate of ATP to the 4'-position of a tetraacyldisaccharide 1-phosphate intermediate (termed DS-1-P) to form tetraacyldisaccharide 1,4'-bis-phosphate (lipid IVA). This chain is Tetraacyldisaccharide 4'-kinase, found in Chlorobium phaeovibrioides (strain DSM 265 / 1930) (Prosthecochloris vibrioformis (strain DSM 265)).